The primary structure comprises 1492 residues: Cystic fibrosis transmembrane conductance regulator (1492 aa).

At 1-78 the chain is on the cytoplasmic side; the sequence is MQRSPIEKAN…KLVNALRRCF (78 aa). Residues 79-99 form a helical membrane-spanning segment; that stretch reads FWRFLFYGILLYFVEFTKAVQ. Positions 82-366 constitute an ABC transmembrane type-1 1 domain; the sequence is FLFYGILLYF…SAIQTWYDSL (285 aa). Over 100-123 the chain is Extracellular; sequence PLCLGRIIASYNAKNTYEREIAYY. The chain crosses the membrane as a helical span at residues 124–147; the sequence is LALGLCLLFVVRTLFLHPAVFGLQ. Residues 148–196 are Cytoplasmic-facing; it reads HLGMQMRIALFSLIYKKILKMSSRVLDKIDTGQLVSLLSNNLNKFDEGV. A helical transmembrane segment spans residues 197-217; that stretch reads AVAHFVWIAPVQVVLLMGLIW. Residues 218 to 223 lie on the Extracellular side of the membrane; the sequence is NELTEF. Residues 224–244 form a helical membrane-spanning segment; sequence VFCGLGFLIMLALFQAWLGKK. Residues 245-299 lie on the Cytoplasmic side of the membrane; the sequence is MMQYRDKRAGKINERLAITSEIIDNIQSVKVYCWEDAMEKIIDDIRQVELKLTRK. Residues 300 to 320 form a helical membrane-spanning segment; it reads VAYCRYFSSSAFFFSGFFVVF. Over 321–340 the chain is Extracellular; the sequence is LSVVPYAFIHTIKLRRIFTT. A helical transmembrane segment spans residues 341–359; sequence ISYNIVLRMTVTRQFPSAI. At 360–867 the chain is on the cytoplasmic side; that stretch reads QTWYDSLGAI…YLRYVTTNRN (508 aa). Residues W402, S435, 459-466, and Q494 contribute to the ATP site; that span reads GSTGSGKS. The region spanning 424-647 is the ABC transporter 1 domain; sequence NGDDGLFFSN…KPDFSSQLLG (224 aa). The tract at residues 655–840 is disordered R region; it reads SAERRNSILT…EEINEEDLKE (186 aa). The chain crosses the membrane as a helical span at residues 868-888; the sequence is LVFVLILCLVIFLAEVAASLA. One can recognise an ABC transmembrane type-1 2 domain in the interval 868–1169; it reads LVFVLILCLV…AVNSSIDVDG (302 aa). Residues 889 to 932 lie on the Extracellular side of the membrane; that stretch reads GLWIISGLAINTGSQTNDTSTDLSHLSVFSKFITNGSHYYIFYI. N-linked (GlcNAc...) asparagine glycosylation is found at N905 and N923. Residues 933 to 953 form a discontinuously helical membrane-spanning segment; sequence YVGLADSFLALGVIRGLPLVH. At 954–1004 the chain is on the cytoplasmic side; sequence TLVTVSKDLHKQMLHSVLQGPMTAFNKMKAGRILNRFIKDTAIIDDMLPLT. A helical transmembrane segment spans residues 1005–1025; sequence VFDFVQLILIVVGAICVVSVL. Residues 1026–1027 lie on the Extracellular side of the membrane; the sequence is QP. Residues 1028-1048 traverse the membrane as a helical segment; it reads YTLLAAIPVAVIFIMLRAYFL. Residues 1049-1109 lie on the Cytoplasmic side of the membrane; the sequence is RTSQQLKQLE…TANWFLYLST (61 aa). The helical transmembrane segment at 1110–1130 threads the bilayer; sequence LRWFQMRIDIVFVLFFIAVTF. Residues 1131–1144 are Extracellular-facing; sequence IAIATHDVGEGQVG. Residues 1145–1165 traverse the membrane as a helical segment; that stretch reads IILTLAMNITSTLQWAVNSSI. At 1166-1492 the chain is on the cytoplasmic side; the sequence is DVDGLMRSVS…AEEDLQETRL (327 aa). Positions 1220 to 1453 constitute an ABC transporter 2 domain; that stretch reads MMVNNLTAKY…ASLFKQVFGH (234 aa). ATP-binding positions include Y1229 and 1254-1261; that span reads GRTGAGKS. The segment covering 1465–1474 has biased composition (basic residues); it reads RNSSKRKTRP. The tract at residues 1465 to 1492 is disordered; sequence RNSSKRKTRPKISALQEEAEEDLQETRL. Positions 1481–1492 are enriched in acidic residues; the sequence is EEAEEDLQETRL. The short motif at 1483-1485 is the PDZ-binding element; it reads AEE.

It belongs to the ABC transporter superfamily. ABCC family. CFTR transporter (TC 3.A.1.202) subfamily. Monomer; does not require oligomerization for channel activity. May form oligomers in the membrane. Phosphorylated; cAMP treatment promotes phosphorylation and activates the channel. Dephosphorylation decreases the ATPase activity (in vitro). Phosphorylation at PKA sites activates the channel. Phosphorylation at PKC sites enhances the response to phosphorylation by PKA. In terms of tissue distribution, expressed in the rectal gland (at protein level).

Its subcellular location is the apical cell membrane. The protein localises to the early endosome membrane. The protein resides in the cell membrane. It localises to the recycling endosome membrane. It is found in the endoplasmic reticulum membrane. The enzyme catalyses ATP + H2O + closed Cl(-) channel = ADP + phosphate + open Cl(-) channel.. The catalysed reaction is chloride(in) = chloride(out). It catalyses the reaction hydrogencarbonate(in) = hydrogencarbonate(out). It carries out the reaction ATP + H2O = ADP + phosphate + H(+). Functionally, epithelial ion channel that plays an important role in the regulation of epithelial ion and water transport and fluid homeostasis. Mediates the transport of chloride ions across the cell membrane. Possesses an intrinsic ATPase activity and utilizes ATP to gate its channel; the passive flow of anions through the channel is gated by cycles of ATP binding and hydrolysis by the ATP-binding domains. The ion channel is also permeable to HCO(3)(-); selectivity depends on the extracellular chloride concentration. Exerts its function also by modulating the activity of other ion channels and transporters. Contributes to the regulation of the pH and the ion content of the epithelial fluid layer. This Squalus acanthias (Spiny dogfish) protein is Cystic fibrosis transmembrane conductance regulator.